We begin with the raw amino-acid sequence, 495 residues long: uncharacterized protein (495 aa).

12 consecutive transmembrane segments (helical) span residues I43–I63, T75–F95, P106–V126, L128–I148, I168–A188, W196–L216, P284–F304, G323–L343, P366–V386, V390–F410, A426–F446, and S461–G481.

This sequence belongs to the major facilitator superfamily. CAR1 family.

The protein localises to the membrane. This is an uncharacterized protein from Schizosaccharomyces pombe (strain 972 / ATCC 24843) (Fission yeast).